The sequence spans 232 residues: Beta-casein (232 aa).

The first 15 residues, 1–15 (MKLLILACFVALALA), serve as a signal peptide directing secretion. Asparagine 22 carries N-linked (GlcNAc...) asparagine glycosylation. Position 24 is a phosphoserine (serine 24). Threonine 27 is subject to Phosphothreonine. A phosphoserine mark is found at serine 30, serine 32, serine 33, and serine 34. The segment covering 48–63 (KLKREEQQQTENERQN) has biased composition (basic and acidic residues). The tract at residues 48–74 (KLKREEQQQTENERQNKIHQFPQPQPL) is disordered.

It belongs to the beta-casein family. In terms of tissue distribution, mammary gland specific. Secreted in milk.

The protein resides in the secreted. In terms of biological role, important role in determination of the surface properties of the casein micelles. This Sus scrofa (Pig) protein is Beta-casein (CSN2).